A 228-amino-acid chain; its full sequence is AA9 family lytic polysaccharide monooxygenase A (228 aa).

Residues His1 and His86 each contribute to the Cu(2+) site. His1 carries the post-translational modification Methylhistidine. 2 cysteine pairs are disulfide-bonded: Cys56/Cys178 and Cys97/Cys101. Residue Asn138 is glycosylated (N-linked (GlcNAc...) asparagine). Positions 164 and 173 each coordinate O2. Residue Tyr175 participates in Cu(2+) binding.

Belongs to the polysaccharide monooxygenase AA9 family. Cu(2+) is required as a cofactor. Post-translationally, the catalytically essential N-terminal histidine His-22 is post-translationally modified by methylation to prevent protonation of the histidine side chain, and protect the critical active site of the enzyme from oxidative damage.

The protein resides in the secreted. It catalyses the reaction [(1-&gt;4)-beta-D-glucosyl]n+m + reduced acceptor + O2 = 4-dehydro-beta-D-glucosyl-[(1-&gt;4)-beta-D-glucosyl]n-1 + [(1-&gt;4)-beta-D-glucosyl]m + acceptor + H2O.. Its activity is regulated as follows. Small amounts of H(2)O(2) boost LPMO activity, while higher amounts lead to inactivation of the enzyme. In terms of biological role, lytic polysaccharide monooxygenase (LPMO) that depolymerizes crystalline and amorphous polysaccharides via the oxidation of scissile alpha- or beta-(1-4)-glycosidic bonds, yielding C1 and C4 oxidation product. Catalysis by LPMOs requires the reduction of the active-site copper from Cu(II) to Cu(I) by a reducing agent and H(2)O(2) or O(2) as a cosubstrate. Is able to cleave cellulose and xylan to produce C1- and C4-oxidized products. This is AA9 family lytic polysaccharide monooxygenase A from Thermoascus aurantiacus.